We begin with the raw amino-acid sequence, 449 residues long: Tubulin alpha chain (449 aa).

Gln11 is a GTP binding site. At Lys40 the chain carries N6-acetyllysine. GTP-binding residues include Glu71, Ser140, Gly144, Thr145, Thr179, Asn206, and Asn228. Glu71 contacts Mg(2+). Glu254 is a catalytic residue.

Belongs to the tubulin family. As to quaternary structure, dimer of alpha and beta chains. A typical microtubule is a hollow water-filled tube with an outer diameter of 25 nm and an inner diameter of 15 nM. Alpha-beta heterodimers associate head-to-tail to form protofilaments running lengthwise along the microtubule wall with the beta-tubulin subunit facing the microtubule plus end conferring a structural polarity. Microtubules usually have 13 protofilaments but different protofilament numbers can be found in some organisms and specialized cells. It depends on Mg(2+) as a cofactor. In terms of processing, undergoes a tyrosination/detyrosination cycle, the cyclic removal and re-addition of a C-terminal tyrosine residue by the enzymes tubulin tyrosine carboxypeptidase (TTCP) and tubulin tyrosine ligase (TTL), respectively. Some glutamate residues at the C-terminus are either polyglutamylated or polyglycylated. These 2 modifications occur exclusively on glutamate residues and result in either polyglutamate or polyglycine chains on the gamma-carboxyl group. Both modifications can coexist on the same protein on adjacent residues, and lowering polyglycylation levels increases polyglutamylation, and reciprocally. The precise function of such modifications is still unclear but they regulate the assembly and dynamics of axonemal microtubules. Post-translationally, acetylation of alpha chains at Lys-40 stabilizes microtubules and affects affinity and processivity of microtubule motors. This modification has a role in multiple cellular functions, ranging from cell motility, cell cycle progression or cell differentiation to intracellular trafficking and signaling.

It is found in the cytoplasm. The protein resides in the cytoskeleton. The enzyme catalyses GTP + H2O = GDP + phosphate + H(+). In terms of biological role, tubulin is the major constituent of microtubules, a cylinder consisting of laterally associated linear protofilaments composed of alpha- and beta-tubulin heterodimers. Microtubules grow by the addition of GTP-tubulin dimers to the microtubule end, where a stabilizing cap forms. Below the cap, tubulin dimers are in GDP-bound state, owing to GTPase activity of alpha-tubulin. This Tetrahymena thermophila protein is Tubulin alpha chain.